Here is a 75-residue protein sequence, read N- to C-terminus: U6-lycotoxin-Ls1d (75 aa).

An N-terminal signal peptide occupies residues 1-21 (MKLLLFTALVLVVISLIEVEA). Positions 22–25 (ENER) are excised as a propeptide.

The protein belongs to the neurotoxin 19 (CSTX) family. 06 (U6-Lctx) subfamily. Post-translationally, contains 4 disulfide bonds. Expressed by the venom gland.

The protein localises to the secreted. The polypeptide is U6-lycotoxin-Ls1d (Lycosa singoriensis (Wolf spider)).